The chain runs to 369 residues: UPF0754 membrane protein Aflv_2299 (369 aa).

2 helical membrane-spanning segments follow: residues 1–21 (MGLF…GGMT) and 347–367 (YLGA…TFFV).

The protein belongs to the UPF0754 family.

The protein localises to the cell membrane. In Anoxybacillus flavithermus (strain DSM 21510 / WK1), this protein is UPF0754 membrane protein Aflv_2299.